A 444-amino-acid chain; its full sequence is Proline--tRNA ligase (444 aa).

The protein belongs to the class-II aminoacyl-tRNA synthetase family. ProS type 2 subfamily. As to quaternary structure, homodimer.

The protein localises to the cytoplasm. It carries out the reaction tRNA(Pro) + L-proline + ATP = L-prolyl-tRNA(Pro) + AMP + diphosphate. Its function is as follows. Catalyzes the attachment of proline to tRNA(Pro) in a two-step reaction: proline is first activated by ATP to form Pro-AMP and then transferred to the acceptor end of tRNA(Pro). The protein is Proline--tRNA ligase of Bradyrhizobium sp. (strain BTAi1 / ATCC BAA-1182).